The chain runs to 272 residues: uncharacterized protein (272 aa).

The N-terminal stretch at 1 to 20 (MMEPKSIFLLGLLLFRVGKL) is a signal peptide.

This is an uncharacterized protein from Caenorhabditis elegans.